The following is a 773-amino-acid chain: Transducin-like enhancer protein 4 (773 aa).

Disordered stretches follow at residues 1 to 22 (MIRD…QPAQ), 140 to 162 (HGHG…AIPP), and 182 to 357 (LPIK…DPLA). The interval 1–136 (MIRDLSKMYP…AIIGQQLQAQ (136 aa)) is q domain. Positions 137-204 (HLSHGHGLPV…HQRDRDSIKS (68 aa)) are GP domain. Positions 183 to 202 (PIKDEKKHHDNDHQRDRDSI) are enriched in basic and acidic residues. Positions 203 to 214 (KSSSVSPSASFR) are enriched in low complexity. The segment at 205–274 (SSVSPSASFR…SPRGSPAHSP (70 aa)) is ccN domain. Residues serine 208, serine 212, serine 216, and serine 222 each carry the phosphoserine modification. A compositionally biased stretch (basic and acidic residues) spans 215 to 252 (GSEKHRNSTDYSSESKKQKTEEKEIAARYDSDGEKSDD). An N6-acetyllysine modification is found at lysine 237. The residue at position 245 (serine 245) is a Phosphoserine. Phosphoserine; by CK2 is present on serine 250. The residue at position 265 (serine 265) is a Phosphoserine; by CDK1. Phosphoserine is present on residues serine 269 and serine 273. Residues 273–289 (SPRENGLDKTRLLKKDA) are compositionally biased toward basic and acidic residues. Residues 275-452 (RENGLDKTRL…PGGKPAYSFH (178 aa)) are SP domain. At lysine 281 the chain carries N6-acetyllysine. The span at 290-305 (PISPASVASSSSTPSS) shows a compositional bias: low complexity. At serine 292 the chain carries Phosphoserine. Positions 317 to 328 (TTPVSKSNTPTP) are enriched in polar residues. Threonine 318 carries the phosphothreonine modification. 2 positions are modified to phosphoserine: serine 321 and serine 323. Threonine 325, threonine 327, threonine 334, and threonine 340 each carry phosphothreonine. The residue at position 419 (serine 419) is a Phosphoserine. WD repeat units lie at residues 485 to 523 (NHGE…NKSP), 531 to 570 (NRDN…PRIK), 575 to 614 (SSAP…LVRQ), 617 to 656 (GHTD…QLQQ), 658 to 697 (DFTS…KYQL), 699 to 738 (LHES…SIFQ), and 740 to 773 (KESS…EVIY).

It belongs to the WD repeat Groucho/TLE family. Homooligomer and heterooligomer with other family members. Interacts with PAX5. Interacts with LEF1, TCF7, TCF7L1 and TCF7L2. Interacts with ZNF703; TLE4 may mediate ZNF703 transcriptional repression. Interacts with SIX3 and SIX6. Interacts with PAX2. Interacts with TLE1. Phosphorylated. PAX5 binding increases phosphorylation. Post-translationally, ubiquitinated by XIAP/BIRC4. As to expression, expressed in bone marrow-derived macrophages.

It is found in the nucleus. Transcriptional corepressor that binds to a number of transcription factors. Inhibits the transcriptional activation mediated by PAX5, and by CTNNB1 and TCF family members in Wnt signaling. The effects of full-length TLE family members may be modulated by association with dominant-negative AES. Essential for the transcriptional repressor activity of SIX3 during retina and lens development and for SIX3 transcriptional auto-repression. Involved in transcriptional repression of GNRHR and enhances MSX1-mediated transcriptional repression of CGA/alpha-GSU. This Mus musculus (Mouse) protein is Transducin-like enhancer protein 4 (Tle4).